Reading from the N-terminus, the 430-residue chain is MTDTLPSTFTASLAEVDPEIAEVLQLELGRQRDYLEMIASENFVPRAVLESVGSVLTNKYAEGYPGRRYYGGCEYVDIAEQLAIDRAKSLFGAEYANVQPHSGASANAAVLSAIATPGETILGLELAHGGHLTHGMKLNFSGKLYNAVAYGVDPETFLVDMDAVRDRALEHKPQVIIAGWSAYPRQLDFAAFRAIADEVGAKLWVDMAHFAGLVAAGLHPSPVPYADVVSSTVHKTLGGPRSGFIVSRDTELAKKLNSNVFPGQQGGPLMHVIAAKATAFKLAATDEFKDRQARTIRGAQLLAERLTAADSRASGVDVLTGGTDVHLVLADLRTSELDGQQAEDILHEVGITVNRNAVPFDPRPPMVTSGLRIGTPALATRGFGDTEFTEVADIIALALRPGADTRALRARVDALTAAFPLYPGLAPSAS.

(6S)-5,6,7,8-tetrahydrofolate contacts are provided by residues Leu126 and 130 to 132 (GHL). Lys235 carries the post-translational modification N6-(pyridoxal phosphate)lysine.

It belongs to the SHMT family. As to quaternary structure, homodimer. It depends on pyridoxal 5'-phosphate as a cofactor.

It is found in the cytoplasm. It carries out the reaction (6R)-5,10-methylene-5,6,7,8-tetrahydrofolate + glycine + H2O = (6S)-5,6,7,8-tetrahydrofolate + L-serine. Its pathway is one-carbon metabolism; tetrahydrofolate interconversion. The protein operates within amino-acid biosynthesis; glycine biosynthesis; glycine from L-serine: step 1/1. Functionally, catalyzes the reversible interconversion of serine and glycine with tetrahydrofolate (THF) serving as the one-carbon carrier. This reaction serves as the major source of one-carbon groups required for the biosynthesis of purines, thymidylate, methionine, and other important biomolecules. Also exhibits THF-independent aldolase activity toward beta-hydroxyamino acids, producing glycine and aldehydes, via a retro-aldol mechanism. The polypeptide is Serine hydroxymethyltransferase (Leifsonia xyli subsp. xyli (strain CTCB07)).